Consider the following 301-residue polypeptide: Mitochondrial carnitine/acylcarnitine carrier protein (301 aa).

N-acetylalanine is present on A2. Residues 2–12 (ADEPKPISPFK) are Cytoplasmic-facing. Solcar repeat units follow at residues 8–99 (ISPF…GKKL), 108–196 (LSYP…LKNL), and 207–293 (LSVP…AMKF). The helical transmembrane segment at 13 to 31 (NLLAGGFGGMCLVFVGHPL) threads the bilayer. Topologically, residues 32–73 (DTVKVRLQTQPPSLSGQPPMYSGTLDCFRKTLMREGITGLYR) are mitochondrial matrix. Residues 74 to 93 (GMAAPIIGVTPMFAVCFFGF) traverse the membrane as a helical segment. The Cytoplasmic segment spans residues 94-112 (GLGKKLQQKSPEDELSYPQ). A helical transmembrane segment spans residues 113 to 131 (LFTAGMLSGVFTTGIMTPG). Topologically, residues 132-170 (ERIKCLLQIQASSGENKYSGTLDCAKKLYQEFGIRGFYK) are mitochondrial matrix. N6-acetyllysine is present on residues K148 and K157. At K170 the chain carries N6-acetyllysine; alternate. At K170 the chain carries N6-succinyllysine; alternate. Residues 171–190 (GTVLTLMRDVPASGMYFMTY) form a helical membrane-spanning segment. The Cytoplasmic portion of the chain corresponds to 191-211 (EWLKNLFTPEGKSVSDLSVPR). The chain crosses the membrane as a helical span at residues 212–230 (ILVAGGFAGIFNWAVAIPP). Residues 231-267 (DVLKSRFQTAPPGKYPNGFRDVLRELIREEGVTSLYK) are Mitochondrial matrix-facing. The chain crosses the membrane as a helical span at residues 268–287 (GFNAVMIRAFPANAACFLGF). Topologically, residues 288–301 (EIAMKFLNWIAPNL) are cytoplasmic.

This sequence belongs to the mitochondrial carrier (TC 2.A.29) family. As to expression, widely expressed, with highest levels in the liver, intermediate levels in heart, testis and kidney and low levels in brain, including cortex, cerebellum, hippocampus and hypothalamus.

The protein resides in the mitochondrion inner membrane. It carries out the reaction O-acetyl-(R)-carnitine(in) + (R)-carnitine(out) = O-acetyl-(R)-carnitine(out) + (R)-carnitine(in). It catalyses the reaction an O-acyl-(R)-carnitine(in) + (R)-carnitine(out) = an O-acyl-(R)-carnitine(out) + (R)-carnitine(in). The enzyme catalyses O-propanoyl-(R)-carnitine(in) + (R)-carnitine(out) = O-propanoyl-(R)-carnitine(out) + (R)-carnitine(in). The catalysed reaction is O-hexadecanoyl-(R)-carnitine(in) + (R)-carnitine(out) = O-hexadecanoyl-(R)-carnitine(out) + (R)-carnitine(in). It carries out the reaction O-octanoyl-(R)-carnitine(in) + (R)-carnitine(out) = O-octanoyl-(R)-carnitine(out) + (R)-carnitine(in). It catalyses the reaction (R)-carnitine(in) = (R)-carnitine(out). In terms of biological role, mediates the electroneutral exchange of acylcarnitines (O-acyl-(R)-carnitine or L-acylcarnitine) of different acyl chain lengths (ranging from O-acetyl-(R)-carnitine to long-chain O-acyl-(R)-carnitines) with free carnitine ((R)-carnitine or L-carnitine) across the mitochondrial inner membrane, via a ping-pong mechanism. Key player in the mitochondrial oxidation pathway, it translocates the fatty acids in the form of acylcarnitines into the mitochondrial matrix, where the carnitine palmitoyltransferase 2 (CPT-2) activates them to undergo fatty acid beta-oxidation. Catalyzes the unidirectional transport (uniport) of carnitine at lower rates than the antiport (exchange). In Mus musculus (Mouse), this protein is Mitochondrial carnitine/acylcarnitine carrier protein.